A 300-amino-acid chain; its full sequence is Cyclic nucleotide synthase CdnE01 (300 aa).

The Mg(2+) site is built by D63, D65, and D137.

Belongs to the CD-NTase family. E01 subfamily. It depends on Mg(2+) as a cofactor.

Its activity is regulated as follows. Binds to and probably activated by a virus-derived, approximately 400 nucleotide RNA (called CBASS-activating bacteriophage RNA, cabRNA) that begins in the viral terminase subunit terS and extends into terL, as well as by a shorter RNA with part of the cabRNA sequence able to form a hairpin. RNA secondary and/or tertiary structure, as well as viral infection itself, are important for CdnE activation. In terms of biological role, cyclic nucleotide synthase (second messenger synthase) of a CBASS antivirus system. CBASS (cyclic oligonucleotide-based antiphage signaling system) provides immunity against bacteriophage. The CD-NTase protein synthesizes cyclic nucleotides in response to infection; these serve as specific second messenger signals. The signals activate a diverse range of effectors, leading to bacterial cell death and thus abortive phage infection. A type I-B CBASS system. Functionally, protects S.aureus against phage infection. When the CBASS operon (cdnE and the following gene) is introduced in S.aureus strain RN4220 there is strong protection against lytic DNA phages 80alpha-vir and phi-NM1-gamma-6 but little to no protection against phages phi-NM4-gamma-4 or phi-12-gamma-3. The polypeptide is Cyclic nucleotide synthase CdnE01 (Staphylococcus haemolyticus).